The sequence spans 123 residues: UPF0102 protein CLM_2733 (123 aa).

It belongs to the UPF0102 family.

The protein is UPF0102 protein CLM_2733 of Clostridium botulinum (strain Kyoto / Type A2).